Consider the following 280-residue polypeptide: Pantothenate synthetase (280 aa).

ATP is bound at residue 30–37; sequence MGYLHEGH. His37 (proton donor) is an active-site residue. Gln61 is a (R)-pantoate binding site. Gln61 lines the beta-alanine pocket. 147–150 lines the ATP pocket; it reads GQKD. Position 153 (Gln153) interacts with (R)-pantoate. ATP-binding positions include Val176 and 184-187; that span reads MSSR.

The protein belongs to the pantothenate synthetase family. In terms of assembly, homodimer.

It is found in the cytoplasm. The enzyme catalyses (R)-pantoate + beta-alanine + ATP = (R)-pantothenate + AMP + diphosphate + H(+). It functions in the pathway cofactor biosynthesis; (R)-pantothenate biosynthesis; (R)-pantothenate from (R)-pantoate and beta-alanine: step 1/1. Catalyzes the condensation of pantoate with beta-alanine in an ATP-dependent reaction via a pantoyl-adenylate intermediate. This chain is Pantothenate synthetase, found in Thermotoga petrophila (strain ATCC BAA-488 / DSM 13995 / JCM 10881 / RKU-1).